The sequence spans 99 residues: DNA-binding protein HU (99 aa).

A disordered region spans residues 67–86 (REGRNPKTGAKMKIDAYNQP).

Belongs to the bacterial histone-like protein family. As to quaternary structure, homodimer.

Functionally, histone-like DNA-binding protein which is capable of wrapping DNA to stabilize it, and thus to prevent its denaturation under extreme environmental conditions. This is DNA-binding protein HU (hup) from Rickettsia felis (strain ATCC VR-1525 / URRWXCal2) (Rickettsia azadi).